The following is a 159-amino-acid chain: Putative 4-hydroxy-4-methyl-2-oxoglutarate aldolase (159 aa).

Substrate contacts are provided by residues 75–78 (GDQL) and arginine 97. Residue aspartate 98 coordinates a divalent metal cation.

The protein belongs to the class II aldolase/RraA-like family. Homotrimer. It depends on a divalent metal cation as a cofactor.

The enzyme catalyses 4-hydroxy-4-methyl-2-oxoglutarate = 2 pyruvate. It catalyses the reaction oxaloacetate + H(+) = pyruvate + CO2. Catalyzes the aldol cleavage of 4-hydroxy-4-methyl-2-oxoglutarate (HMG) into 2 molecules of pyruvate. Also contains a secondary oxaloacetate (OAA) decarboxylase activity due to the common pyruvate enolate transition state formed following C-C bond cleavage in the retro-aldol and decarboxylation reactions. The sequence is that of Putative 4-hydroxy-4-methyl-2-oxoglutarate aldolase from Laribacter hongkongensis (strain HLHK9).